Reading from the N-terminus, the 502-residue chain is Lysine--tRNA ligase (502 aa).

The interval 1-22 (MSDHEQAQAQSQDENQIMAERR) is disordered. 2 residues coordinate Mg(2+): E413 and E420.

Belongs to the class-II aminoacyl-tRNA synthetase family. As to quaternary structure, homodimer. It depends on Mg(2+) as a cofactor.

It localises to the cytoplasm. The catalysed reaction is tRNA(Lys) + L-lysine + ATP = L-lysyl-tRNA(Lys) + AMP + diphosphate. This chain is Lysine--tRNA ligase, found in Chromobacterium violaceum (strain ATCC 12472 / DSM 30191 / JCM 1249 / CCUG 213 / NBRC 12614 / NCIMB 9131 / NCTC 9757 / MK).